A 257-amino-acid polypeptide reads, in one-letter code: MGTLGRAIHTVGNRIRGTAQAQARVGSLLQGSHHIEKHLSRHRTLITVAPNASVIGDVQINKGSFISYASVSRDLQYPRAMGMGQVRRFSEDVSHMPEMEDSDVLNAFKDLMAADWAELPSAVVKDAKTAISKNTDDKAGQEALKNVFRAAEAVEEFGGILTSIKMEIDDSIGMSGEGVKPLPNDITDALRTAYQRYAEYLDSFEPEEVYLKKKVEMELGTKMIHLKMRCSGLGSEWGKVTVLGTSGLSGSYVEQRA.

The transit peptide at 1–89 (MGTLGRAIHT…AMGMGQVRRF (89 aa)) directs the protein to the mitochondrion.

In terms of assembly, component of complex II composed of eight subunits in plants: four classical SDH subunits SDH1, SDH2, SDH3 and SDH4 (a flavoprotein (FP), an iron-sulfur protein (IP), and a cytochrome b composed of a large and a small subunit.), as well as four subunits unknown in mitochondria from bacteria and heterotrophic eukaryotes.

The protein localises to the mitochondrion inner membrane. It participates in carbohydrate metabolism; tricarboxylic acid cycle. The protein is Succinate dehydrogenase subunit 5, mitochondrial of Arabidopsis thaliana (Mouse-ear cress).